The chain runs to 399 residues: PCI domain-containing protein 2 (399 aa).

One can recognise a PCI domain in the interval 210-391 (VTYKYYVGRK…QKLVVSKQNP (182 aa)).

This sequence belongs to the CSN12 family.

This chain is PCI domain-containing protein 2 (pcid2), found in Danio rerio (Zebrafish).